We begin with the raw amino-acid sequence, 513 residues long: Histidine ammonia-lyase (513 aa).

The 5-imidazolinone (Ala-Gly) cross-link spans alanine 144 to glycine 146. Serine 145 is subject to 2,3-didehydroalanine (Ser).

This sequence belongs to the PAL/histidase family. Contains an active site 4-methylidene-imidazol-5-one (MIO), which is formed autocatalytically by cyclization and dehydration of residues Ala-Ser-Gly.

It is found in the cytoplasm. The catalysed reaction is L-histidine = trans-urocanate + NH4(+). The protein operates within amino-acid degradation; L-histidine degradation into L-glutamate; N-formimidoyl-L-glutamate from L-histidine: step 1/3. The protein is Histidine ammonia-lyase of Streptococcus pyogenes serotype M1.